A 421-amino-acid chain; its full sequence is Glutamyl-tRNA reductase (421 aa).

Substrate is bound by residues 49 to 52, Ser-109, 114 to 116, and Gln-120; these read TCNR and EAQ. The active-site Nucleophile is Cys-50. 189–194 provides a ligand contact to NADP(+); it reads GAGEMC.

This sequence belongs to the glutamyl-tRNA reductase family. Homodimer.

The catalysed reaction is (S)-4-amino-5-oxopentanoate + tRNA(Glu) + NADP(+) = L-glutamyl-tRNA(Glu) + NADPH + H(+). The protein operates within porphyrin-containing compound metabolism; protoporphyrin-IX biosynthesis; 5-aminolevulinate from L-glutamyl-tRNA(Glu): step 1/2. In terms of biological role, catalyzes the NADPH-dependent reduction of glutamyl-tRNA(Glu) to glutamate 1-semialdehyde (GSA). In Magnetococcus marinus (strain ATCC BAA-1437 / JCM 17883 / MC-1), this protein is Glutamyl-tRNA reductase.